A 610-amino-acid chain; its full sequence is Transducer of Cdc42-dependent actin assembly protein 2 homolog (610 aa).

The region spanning 1–267 is the F-BAR domain; it reads MIPVSRFFTV…EVGKIDAEGD (267 aa). The segment at 283-315 is disordered; it reads APFEIEDLGDPKNCDSRTNDSADGSGGKLLKSS. The span at 291–302 shows a compositional bias: basic and acidic residues; that stretch reads GDPKNCDSRTND. In terms of domain architecture, REM-1 spans 352–429; the sequence is SKPAHVRLSC…IHNLKEFYAM (78 aa). The stretch at 355–385 forms a coiled coil; sequence AHVRLSCLRSKIRDMEKQLEQAIQGREGITR. 2 disordered regions span residues 436-487 and 499-519; these read EGQE…SSKN and LISSPKTSKSSTPTPLRRRAE. Over residues 437–449 the composition is skewed to basic and acidic residues; sequence GQERSFGGRDTPD. Residues 453–464 are compositionally biased toward low complexity; sequence SMSGSSTNQSSS. A compositionally biased stretch (polar residues) spans 475–487; it reads AGNSSSADDSSKN. The span at 501 to 513 shows a compositional bias: low complexity; sequence SSPKTSKSSTPTP. The 64-residue stretch at 547 to 610 folds into the SH3 domain; sequence ETAVTVTALF…VPTSYLQFPQ (64 aa).

It belongs to the FNBP1 family. Interacts (via SH3 domain) with wsp-1 and abi-1. Interacts with cdc-42 and (via SH3 domain) with wve-1.

Its subcellular location is the cell junction. The protein localises to the cell membrane. It is found in the cytoplasmic vesicle. The protein resides in the cytoplasm. It localises to the recycling endosome. Plays a role in protein trafficking, actin organization and embryonic morphogenesis. Potentially acts as a cdc-42 effector. May play a role in egg laying. Together with toca-1, is required for protein trafficking regulating yolk protein clathrin-mediated endocytosis by oocytes during oogenesis and retrograde recycling and the sorting of recycling endosome cargo proteins such as mig-14. Also, together with toca-2, controls the distribution of actin at cell junctions. In Caenorhabditis elegans, this protein is Transducer of Cdc42-dependent actin assembly protein 2 homolog.